A 180-amino-acid polypeptide reads, in one-letter code: Molybdopterin synthase catalytic subunit (180 aa).

Residues 123–124, K139, and 146–148 contribute to the substrate site; these read HR and KLE. The interval 161–180 is disordered; sequence RDGQKGVKVEGGKEGVEAKH.

The protein belongs to the MoaE family. MOCS2B subfamily. Heterotetramer; composed of 2 small (MOCS2A) and 2 large (MOCS2B) subunits.

It localises to the cytoplasm. It carries out the reaction 2 [molybdopterin-synthase sulfur-carrier protein]-C-terminal-Gly-aminoethanethioate + cyclic pyranopterin phosphate + H2O = molybdopterin + 2 [molybdopterin-synthase sulfur-carrier protein]-C-terminal Gly-Gly + 2 H(+). The protein operates within cofactor biosynthesis; molybdopterin biosynthesis. In terms of biological role, catalytic subunit of the molybdopterin synthase complex, a complex that catalyzes the conversion of precursor Z into molybdopterin. Acts by mediating the incorporation of 2 sulfur atoms from thiocarboxylated MOCS2A into precursor Z to generate a dithiolene group. The polypeptide is Molybdopterin synthase catalytic subunit (Pyrenophora tritici-repentis (strain Pt-1C-BFP) (Wheat tan spot fungus)).